A 278-amino-acid chain; its full sequence is Type II restriction enzyme NgoPII (278 aa).

This sequence belongs to the NgoPII type II restriction endonuclease family.

The enzyme catalyses Endonucleolytic cleavage of DNA to give specific double-stranded fragments with terminal 5'-phosphates.. Its function is as follows. A P subtype restriction enzyme that recognizes the double-stranded sequence 5'-GGCC-3' and cleaves after G-2. The polypeptide is Type II restriction enzyme NgoPII (ngoPIIR) (Neisseria gonorrhoeae).